The sequence spans 629 residues: tRNA uridine 5-carboxymethylaminomethyl modification enzyme MnmG (629 aa).

Residues Gly-13–Gly-18, Val-125, and Ser-180 contribute to the FAD site. NAD(+) is bound at residue Gly-273–Phe-287. Gln-370 is an FAD binding site.

It belongs to the MnmG family. Homodimer. Heterotetramer of two MnmE and two MnmG subunits. Requires FAD as cofactor.

The protein resides in the cytoplasm. Its function is as follows. NAD-binding protein involved in the addition of a carboxymethylaminomethyl (cmnm) group at the wobble position (U34) of certain tRNAs, forming tRNA-cmnm(5)s(2)U34. The chain is tRNA uridine 5-carboxymethylaminomethyl modification enzyme MnmG from Psychromonas ingrahamii (strain DSM 17664 / CCUG 51855 / 37).